Consider the following 216-residue polypeptide: 2,5-diamino-6-ribosylamino-4(3H)-pyrimidinone 5'-phosphate reductase (216 aa).

Residues Thr51, Asp55, 79–82, Val126, and 148–151 contribute to the NADP(+) site; these read SMAR and GSTL.

The protein belongs to the HTP reductase family. Homodimer.

The enzyme catalyses 2,5-diamino-6-(1-D-ribitylamino)pyrimidin-4(3H)-one 5'-phosphate + NADP(+) = 2,5-diamino-6-(1-D-ribosylamino)pyrimidin-4(3H)-one 5'-phosphate + NADPH + H(+). The catalysed reaction is 2,5-diamino-6-(1-D-ribitylamino)pyrimidin-4(3H)-one 5'-phosphate + NAD(+) = 2,5-diamino-6-(1-D-ribosylamino)pyrimidin-4(3H)-one 5'-phosphate + NADH + H(+). The protein operates within cofactor biosynthesis; riboflavin biosynthesis. Catalyzes an early step in riboflavin biosynthesis, the NADPH-dependent reduction of the ribose side chain of 2,5-diamino-6-ribosylamino-4(3H)-pyrimidinone 5'-phosphate, yielding 2,5-diamino-6-ribitylamino-4(3H)-pyrimidinone 5'-phosphate. The chain is 2,5-diamino-6-ribosylamino-4(3H)-pyrimidinone 5'-phosphate reductase from Methanothermobacter thermautotrophicus (strain ATCC 29096 / DSM 1053 / JCM 10044 / NBRC 100330 / Delta H) (Methanobacterium thermoautotrophicum).